Reading from the N-terminus, the 153-residue chain is 6,7-dimethyl-8-ribityllumazine synthase (153 aa).

5-amino-6-(D-ribitylamino)uracil contacts are provided by residues F21, 55 to 57 (AFE), and 79 to 81 (TVI). A (2S)-2-hydroxy-3-oxobutyl phosphate-binding site is contributed by 84–85 (AT). H87 (proton donor) is an active-site residue. F112 provides a ligand contact to 5-amino-6-(D-ribitylamino)uracil. A (2S)-2-hydroxy-3-oxobutyl phosphate-binding site is contributed by R126.

Belongs to the DMRL synthase family. As to quaternary structure, forms an icosahedral capsid composed of 60 subunits, arranged as a dodecamer of pentamers.

It catalyses the reaction (2S)-2-hydroxy-3-oxobutyl phosphate + 5-amino-6-(D-ribitylamino)uracil = 6,7-dimethyl-8-(1-D-ribityl)lumazine + phosphate + 2 H2O + H(+). The protein operates within cofactor biosynthesis; riboflavin biosynthesis; riboflavin from 2-hydroxy-3-oxobutyl phosphate and 5-amino-6-(D-ribitylamino)uracil: step 1/2. Catalyzes the formation of 6,7-dimethyl-8-ribityllumazine by condensation of 5-amino-6-(D-ribitylamino)uracil with 3,4-dihydroxy-2-butanone 4-phosphate. This is the penultimate step in the biosynthesis of riboflavin. The sequence is that of 6,7-dimethyl-8-ribityllumazine synthase from Bacillus cereus (strain AH187).